The sequence spans 314 residues: L-lactate dehydrogenase (314 aa).

NAD(+) contacts are provided by residues Val16, Asp37, Lys42, Tyr68, and 82-83 (GV). Gln85 and Arg91 together coordinate substrate. Residues Ser104, 121 to 123 (ASN), and Thr146 contribute to the NAD(+) site. Substrate is bound at residue 123 to 126 (NPVD). 151–154 (DTTR) is a binding site for substrate. Beta-D-fructose 1,6-bisphosphate is bound by residues Arg156 and His171. The Proton acceptor role is filled by His178. A Phosphotyrosine modification is found at Tyr223. Thr232 is a binding site for substrate.

It belongs to the LDH/MDH superfamily. LDH family. As to quaternary structure, homotetramer.

It localises to the cytoplasm. It catalyses the reaction (S)-lactate + NAD(+) = pyruvate + NADH + H(+). It participates in fermentation; pyruvate fermentation to lactate; (S)-lactate from pyruvate: step 1/1. Allosterically activated by fructose 1,6-bisphosphate (FBP). In terms of biological role, catalyzes the conversion of lactate to pyruvate. The chain is L-lactate dehydrogenase from Lactococcus lactis subsp. cremoris (strain MG1363).